The sequence spans 469 residues: 3-isopropylmalate dehydratase large subunit (469 aa).

[4Fe-4S] cluster is bound by residues cysteine 350, cysteine 410, and cysteine 413.

The protein belongs to the aconitase/IPM isomerase family. LeuC type 1 subfamily. Heterodimer of LeuC and LeuD. The cofactor is [4Fe-4S] cluster.

The enzyme catalyses (2R,3S)-3-isopropylmalate = (2S)-2-isopropylmalate. It participates in amino-acid biosynthesis; L-leucine biosynthesis; L-leucine from 3-methyl-2-oxobutanoate: step 2/4. Catalyzes the isomerization between 2-isopropylmalate and 3-isopropylmalate, via the formation of 2-isopropylmaleate. This is 3-isopropylmalate dehydratase large subunit from Sinorhizobium medicae (strain WSM419) (Ensifer medicae).